The sequence spans 419 residues: uncharacterized protein (419 aa).

Helical transmembrane passes span 5–25 (MIIV…ALII), 26–46 (AAGV…AQQI), 53–73 (FPML…GGEL), 102–122 (VFGG…SVLI), 144–164 (VIDV…VSGV), 170–190 (FVAG…VCWF), 210–230 (ATLA…ILFL), 234–254 (LATP…LSLL), 274–294 (ATGV…VLTF), 309–329 (ISSP…VGMP), 332–352 (MPPA…TIGL), 360–380 (MMVI…TLFI), and 396–416 (LWPF…IPAL).

It belongs to the YiaN/YgiK family.

Its subcellular location is the cell inner membrane. This is an uncharacterized protein from Sinorhizobium fredii (strain NBRC 101917 / NGR234).